The following is a 304-amino-acid chain: Ribonuclease Z (304 aa).

Zn(2+)-binding residues include His-63, His-65, Asp-67, His-68, His-141, Asp-208, and His-266. The Proton acceptor role is filled by Asp-67.

Belongs to the RNase Z family. Homodimer. It depends on Zn(2+) as a cofactor.

The enzyme catalyses Endonucleolytic cleavage of RNA, removing extra 3' nucleotides from tRNA precursor, generating 3' termini of tRNAs. A 3'-hydroxy group is left at the tRNA terminus and a 5'-phosphoryl group is left at the trailer molecule.. Zinc phosphodiesterase, which displays some tRNA 3'-processing endonuclease activity. Probably involved in tRNA maturation, by removing a 3'-trailer from precursor tRNA. This Chlamydia trachomatis serovar D (strain ATCC VR-885 / DSM 19411 / UW-3/Cx) protein is Ribonuclease Z.